A 492-amino-acid chain; its full sequence is Cobyric acid synthase (492 aa).

The 189-residue stretch at 252 to 440 (QLNVVVPVLT…LHGIFEQTEA (189 aa)) folds into the GATase cobBQ-type domain. Cysteine 333 acts as the Nucleophile in catalysis. The active site involves histidine 432.

This sequence belongs to the CobB/CobQ family. CobQ subfamily.

Its pathway is cofactor biosynthesis; adenosylcobalamin biosynthesis. In terms of biological role, catalyzes amidations at positions B, D, E, and G on adenosylcobyrinic A,C-diamide. NH(2) groups are provided by glutamine, and one molecule of ATP is hydrogenolyzed for each amidation. This Photobacterium profundum (strain SS9) protein is Cobyric acid synthase.